The sequence spans 352 residues: Ion-translocating oxidoreductase complex subunit D (352 aa).

4 helical membrane passes run 20–40, 42–62, 89–109, and 123–143; these read IMLL…WFFG, GTLV…ALVL, IPPL…VIIA, and PAMI…TSWL. Residue T187 is modified to FMN phosphoryl threonine. A run of 5 helical transmembrane segments spans residues 214–234, 242–262, 267–287, 301–321, and 322–342; these read ILAG…GVWL, WHIP…GWLF, LASP…FFIL, LIFG…GGYP, and DGVA…DYYT.

The protein belongs to the NqrB/RnfD family. In terms of assembly, the complex is composed of six subunits: RsxA, RsxB, RsxC, RsxD, RsxE and RsxG. FMN is required as a cofactor.

Its subcellular location is the cell inner membrane. Part of a membrane-bound complex that couples electron transfer with translocation of ions across the membrane. Required to maintain the reduced state of SoxR. The polypeptide is Ion-translocating oxidoreductase complex subunit D (Escherichia coli O17:K52:H18 (strain UMN026 / ExPEC)).